A 191-amino-acid chain; its full sequence is Cell division protein SepF (191 aa).

Residues F153–P178 show a composition bias toward polar residues. Residues F153–S191 are disordered.

This sequence belongs to the SepF family. Homodimer. Interacts with FtsZ.

It is found in the cytoplasm. Cell division protein that is part of the divisome complex and is recruited early to the Z-ring. Probably stimulates Z-ring formation, perhaps through the cross-linking of FtsZ protofilaments. Its function overlaps with FtsA. This chain is Cell division protein SepF, found in Prochlorococcus marinus (strain MIT 9515).